Consider the following 272-residue polypeptide: Glutamate racemase (272 aa).

Substrate contacts are provided by residues Asp-16 to Ser-17 and Tyr-48 to Gly-49. Cys-79 functions as the Proton donor/acceptor in the catalytic mechanism. A substrate-binding site is contributed by Asn-80 to Thr-81. Cys-191 (proton donor/acceptor) is an active-site residue. Position 192-193 (Thr-192–His-193) interacts with substrate.

The protein belongs to the aspartate/glutamate racemases family.

The catalysed reaction is L-glutamate = D-glutamate. It participates in cell wall biogenesis; peptidoglycan biosynthesis. In terms of biological role, provides the (R)-glutamate required for cell wall biosynthesis. The polypeptide is Glutamate racemase (Chlorobaculum tepidum (strain ATCC 49652 / DSM 12025 / NBRC 103806 / TLS) (Chlorobium tepidum)).